An 80-amino-acid chain; its full sequence is UPF0154 protein SH1564 (80 aa).

Residues 4–24 (WLAILLIIVALIGGLVGGFFL) form a helical membrane-spanning segment.

The protein belongs to the UPF0154 family.

The protein resides in the membrane. In Staphylococcus haemolyticus (strain JCSC1435), this protein is UPF0154 protein SH1564.